The chain runs to 432 residues: Glutamate-1-semialdehyde 2,1-aminomutase (432 aa).

The residue at position 265 (lysine 265) is an N6-(pyridoxal phosphate)lysine.

It belongs to the class-III pyridoxal-phosphate-dependent aminotransferase family. HemL subfamily. In terms of assembly, homodimer. Pyridoxal 5'-phosphate serves as cofactor.

It localises to the cytoplasm. It catalyses the reaction (S)-4-amino-5-oxopentanoate = 5-aminolevulinate. It participates in porphyrin-containing compound metabolism; protoporphyrin-IX biosynthesis; 5-aminolevulinate from L-glutamyl-tRNA(Glu): step 2/2. In Histophilus somni (strain 2336) (Haemophilus somnus), this protein is Glutamate-1-semialdehyde 2,1-aminomutase.